The following is a 361-amino-acid chain: Velvet complex subunit B (361 aa).

The Velvet domain occupies 1–336 (MIVRTEDQKL…GNQGQKLPLR (336 aa)). Disordered stretches follow at residues 42-222 (PSST…NNIP) and 327-361 (GNQG…EDDS). Low complexity-rich tracts occupy residues 57 to 74 (PSAS…SRPP) and 93 to 107 (PPSS…SQSQ). A compositionally biased stretch (polar residues) spans 108–127 (DNLTPSSPYPPHSNSEQPQT). Over residues 130 to 147 (YPPPPPIDRAAPFPPPVL) the composition is skewed to pro residues. Polar residues-rich tracts occupy residues 149-168 (SIQS…NNDD), 181-196 (GYTN…YGSG), and 212-222 (SGNATPQNNIP). A compositionally biased stretch (basic residues) spans 335–349 (LRNRHGTGSKRRRRN).

The protein belongs to the velvet family. VelB subfamily. As to quaternary structure, component of the heterotrimeric velvet complex composed of laeA, veA and velB; VeA acting as a bridging protein between laeA and velB. Forms a heterodimeric complex with vosA; the formation of the velB-vosA complex is light-dependent.

It is found in the nucleus. It localises to the cytoplasm. Functionally, component of the velvet transcription factor complex that controls sexual/asexual developmental ratio in response to light, promoting sexual development in the darkness while stimulating asexual sporulation under illumination. The velvet complex acts as a global regulator for secondary metabolite gene expression. Component of the velB-VosA heterodimeric complex that plays a dual role in activating genes associated with spore maturation and repressing certain development-associated genes. The velB-VosA complex binds DNA through the DNA-binding domain of vosA that recognizes an 11-nucleotide consensus sequence 5'-CTGGCCGCGGC-3' consisting of two motifs in the promoters of key developmental regulatory genes. This chain is Velvet complex subunit B, found in Coprinopsis cinerea (strain Okayama-7 / 130 / ATCC MYA-4618 / FGSC 9003) (Inky cap fungus).